The chain runs to 407 residues: Methyltransferase/ribosomally synthesized type I borosin cyclic peptide precursor ceuMA2 (407 aa).

Positions 1 to 246 (MATTKTGSLT…TTSTLYIPPR (246 aa)) are methyltransferase domain. Catalysis depends on residues Arg70, Tyr74, and Tyr96. The S-adenosyl-L-methionine site is built by Tyr96, His98, Val101, Ala128, Gln170, Gly208, Ser239, and Thr240. Residues 247–370 (EIAPVDQRIM…GPVYKVMRAT (124 aa)) are clasp domain. Positions 371-393 (PAAIAAGQEHSLDEIAGSADSES) are precursor leader. Thr399 and Thr400 each carry N-methylthreonine. Ile401 carries the post-translational modification N-methylisoleucine. Val402 and Val403 each carry N-methylvaline. N-methylisoleucine is present on Ile404. Val405 carries the post-translational modification N-methylvaline. His406 is modified (N-methylhistidine).

The protein in the N-terminal section; belongs to the precorrin methyltransferase family. As to quaternary structure, homodimer. CeuMA2 automethylates at Thr-399, Thr-400, Ile-401, Val-402, Val-403, Ile-404, Val-405 and His-406 before being processed by a prolyloligopeptidase which likely forms a peptidyl ester upon removal of the follower propeptide, which then undergoes macrocyclization with the N-terminus of the modified core peptide. Peptide backbone alpha-N-methylations change the physicochemical properties of amide bonds to provide structural constraints and other favorable characteristics including biological membrane permeability to peptides.

It participates in secondary metabolite biosynthesis. Its function is as follows. Fusion protein of the methyltransferase ceuM2 and a type I borosin core peptide; part of the gene cluster that mediates the biosynthesis of a type I borosin, a highly methylated cyclic peptide with potent biological activities. Type I borosins derive from the C-terminus of the fusion protein, and it is the same protein that methylates its own C-terminus using S-adenosyl methionine (SAM). The C-terminus is subsequently cleaved off and macrocyclized by a prolyloligopeptidase to give the final product. The chain is Methyltransferase/ribosomally synthesized type I borosin cyclic peptide precursor ceuMA2 from Cerrena unicolor (Canker rot fungus).